The primary structure comprises 347 residues: GMP reductase (347 aa).

108–131 (ADFDKMKQILALSPSLKFICIDVA) contributes to the NADP(+) binding site. Positions 181 and 183 each coordinate K(+). Cys186 serves as the catalytic Thioimidate intermediate. 216 to 239 (IVSDGGCSVPGDVAKAFGGGADFV) provides a ligand contact to NADP(+).

Belongs to the IMPDH/GMPR family. GuaC type 1 subfamily. As to quaternary structure, homotetramer.

It carries out the reaction IMP + NH4(+) + NADP(+) = GMP + NADPH + 2 H(+). Functionally, catalyzes the irreversible NADPH-dependent deamination of GMP to IMP. It functions in the conversion of nucleobase, nucleoside and nucleotide derivatives of G to A nucleotides, and in maintaining the intracellular balance of A and G nucleotides. The polypeptide is GMP reductase (Yersinia pestis bv. Antiqua (strain Antiqua)).